The sequence spans 290 residues: MQPISWRERLQAYYYLCRFDKPIGTELVFWPTMWALWIASDGYPDLKMFVVMTLGVLFMRAAGCAINDFADRKVDGHVARTKQRPLATGIIRPIEAIWVFLALVAASAALLLFLPIETFYWSFGALFLAFIYPFMKRYTHLPQVFLGAAFSWAIPMAYTATGQAPDLTCWLLYFGNLAWTVAYDTQYAITDREYDLKIGVKSTAILFNRFDIPIISTLQLSSLLLIGMALYIENLLFPWGIIGLVVVAVDFIYQWTKTKNRDPQLCFWAFRHNRWVGLIIFLAILAAFRF.

9 helical membrane-spanning segments follow: residues 23–43, 46–66, 96–116, 118–138, 141–161, 169–189, 212–232, 235–255, and 265–285; these read IGTE…SDGY, LKMF…GCAI, AIWV…FLPI, TFYW…MKRY, LPQV…YTAT, CWLL…QYAI, IPII…ALYI, LLFP…IYQW, and LCFW…LAIL.

This sequence belongs to the UbiA prenyltransferase family. Requires Mg(2+) as cofactor.

It is found in the cell inner membrane. It carries out the reaction all-trans-octaprenyl diphosphate + 4-hydroxybenzoate = 4-hydroxy-3-(all-trans-octaprenyl)benzoate + diphosphate. Its pathway is cofactor biosynthesis; ubiquinone biosynthesis. Catalyzes the prenylation of para-hydroxybenzoate (PHB) with an all-trans polyprenyl group. Mediates the second step in the final reaction sequence of ubiquinone-8 (UQ-8) biosynthesis, which is the condensation of the polyisoprenoid side chain with PHB, generating the first membrane-bound Q intermediate 3-octaprenyl-4-hydroxybenzoate. The protein is 4-hydroxybenzoate octaprenyltransferase of Acinetobacter baylyi (strain ATCC 33305 / BD413 / ADP1).